A 346-amino-acid chain; its full sequence is Acetyl-coenzyme A carboxylase carboxyl transferase subunit beta (346 aa).

One can recognise a CoA carboxyltransferase N-terminal domain in the interval 24–292 (LWIKCPKSGD…LPEVEPIAVA (269 aa)). Over residues 300-311 (AEAEAAPDEVVE) the composition is skewed to acidic residues. Positions 300–346 (AEAEAAPDEVVEVEAPAVDEIVEEKPAATKAKPRSKAKSKAAPKTDE) are disordered. The span at 330 to 340 (AKPRSKAKSKA) shows a compositional bias: basic residues.

It belongs to the AccD/PCCB family. Acetyl-CoA carboxylase is a heterohexamer composed of biotin carboxyl carrier protein (AccB), biotin carboxylase (AccC) and two subunits each of ACCase subunit alpha (AccA) and ACCase subunit beta (AccD).

Its subcellular location is the cytoplasm. The enzyme catalyses N(6)-carboxybiotinyl-L-lysyl-[protein] + acetyl-CoA = N(6)-biotinyl-L-lysyl-[protein] + malonyl-CoA. It participates in lipid metabolism; malonyl-CoA biosynthesis; malonyl-CoA from acetyl-CoA: step 1/1. Its function is as follows. Component of the acetyl coenzyme A carboxylase (ACC) complex. Biotin carboxylase (BC) catalyzes the carboxylation of biotin on its carrier protein (BCCP) and then the CO(2) group is transferred by the transcarboxylase to acetyl-CoA to form malonyl-CoA. The protein is Acetyl-coenzyme A carboxylase carboxyl transferase subunit beta of Hirschia baltica (strain ATCC 49814 / DSM 5838 / IFAM 1418).